A 165-amino-acid polypeptide reads, in one-letter code: PTS system glucose-specific EIIA component (165 aa).

A PTS EIIA type-1 domain is found at 33–137; the sequence is DPVFAGRMMG…STITPIVITN (105 aa). Residues histidine 70 and histidine 85 each contribute to the Zn(2+) site. Histidine 85 (tele-phosphohistidine intermediate; for EIIA activity) is an active-site residue. Histidine 85 bears the Phosphohistidine; by HPr mark.

In terms of assembly, heterodimer with glycerol kinase (glpk). Requires Zn(2+) as cofactor.

It is found in the cytoplasm. In terms of biological role, the phosphoenolpyruvate-dependent sugar phosphotransferase system (sugar PTS), a major carbohydrate active transport system, catalyzes the phosphorylation of incoming sugar substrates concomitantly with their translocation across the cell membrane. The enzyme II complex composed of PtsG and Crr is involved in glucose transport. The sequence is that of PTS system glucose-specific EIIA component (crr) from Bacillus anthracis.